We begin with the raw amino-acid sequence, 289 residues long: 33 kDa chaperonin (289 aa).

Intrachain disulfides connect cysteine 229–cysteine 231 and cysteine 262–cysteine 265.

It belongs to the HSP33 family. Under oxidizing conditions two disulfide bonds are formed involving the reactive cysteines. Under reducing conditions zinc is bound to the reactive cysteines and the protein is inactive.

It localises to the cytoplasm. Functionally, redox regulated molecular chaperone. Protects both thermally unfolding and oxidatively damaged proteins from irreversible aggregation. Plays an important role in the bacterial defense system toward oxidative stress. This chain is 33 kDa chaperonin, found in Pectobacterium atrosepticum (strain SCRI 1043 / ATCC BAA-672) (Erwinia carotovora subsp. atroseptica).